The chain runs to 100 residues: Cytochrome bo(3) ubiquinol oxidase subunit 4 (100 aa).

Residues 1–9 (MLKNRYLKY) are Cytoplasmic-facing. A helical transmembrane segment spans residues 10–32 (LFILILLSILSIMPIFAIIYRIF). The Extracellular segment spans residues 33–36 (SRNY). The chain crosses the membrane as a helical span at residues 37-59 (LYAFIIVCLFFQILAHIKFFLNL). The Cytoplasmic portion of the chain corresponds to 60 to 68 (DFSLEQRWK). The helical transmembrane segment at 69–90 (LISVIFSLVVGLIILLGSIWVI) threads the bilayer. The Extracellular segment spans residues 91 to 100 (KNLNNNLCIM).

Belongs to the cytochrome c oxidase bacterial subunit 4 family. As to quaternary structure, heterooctamer of two A chains, two B chains, two C chains and two D chains.

Its subcellular location is the cell membrane. In terms of biological role, cytochrome bo(3) ubiquinol terminal oxidase is the component of the aerobic respiratory chain of E.coli that predominates when cells are grown at high aeration. Has proton pump activity across the membrane in addition to electron transfer, pumping 2 protons/electron. This is Cytochrome bo(3) ubiquinol oxidase subunit 4 (cyoD) from Buchnera aphidicola subsp. Baizongia pistaciae (strain Bp).